The primary structure comprises 254 residues: Sec-independent protein translocase protein TatCy (254 aa).

Helical transmembrane passes span 24-44 (IVALAFVVFFIAGFFLAKPII), 67-87 (LYVFMQFAFIIGIVLTSPVIL), 112-132 (VSILLFLAGLSFSYYILFPFV), 157-177 (FLLQLTIPFGLLFQMPVILMF), 187-207 (MFLAKIRKYAYFTLLVIAALI), and 212-232 (LLSHMMVTVPLLILYEISILI).

Belongs to the TatC family. In terms of assembly, forms a complex with TatAy. Two types of complexes exist: one composed of TatAy and TatCy, and another composed only of TatAy.

It localises to the cell membrane. Its function is as follows. Part of the twin-arginine translocation (Tat) system that transports large folded proteins containing a characteristic twin-arginine motif in their signal peptide across membranes. Required for YwbN secretion. The sequence is that of Sec-independent protein translocase protein TatCy from Bacillus subtilis (strain 168).